Here is a 461-residue protein sequence, read N- to C-terminus: Secreted 45 kDa protein (461 aa).

The signal sequence occupies residues 1-27 (MKKKIISAILMSTVILSAAAPLSGVYA). A compositionally biased stretch (low complexity) spans 264-329 (SSASASSSQA…GNTNSGTSTG (66 aa)). The disordered stretch occupies residues 264 to 343 (SSASASSSQA…TTTGGSGINS (80 aa)). The span at 330 to 340 (NTGGTTTGGSG) shows a compositional bias: gly residues. In terms of domain architecture, Peptidase C51 spans 330–459 (NTGGTTTGGS…VSASGVTFLM (130 aa)).

This Lactococcus lactis subsp. cremoris (strain MG1363) protein is Secreted 45 kDa protein (usp45).